Consider the following 207-residue polypeptide: Thiamine-phosphate synthase (207 aa).

Residues 35–39 and asparagine 67 contribute to the 4-amino-2-methyl-5-(diphosphooxymethyl)pyrimidine site; that span reads QYRDK. Residues aspartate 68 and aspartate 86 each coordinate Mg(2+). Threonine 105 contributes to the 4-amino-2-methyl-5-(diphosphooxymethyl)pyrimidine binding site. Residue 132 to 134 participates in 2-[(2R,5Z)-2-carboxy-4-methylthiazol-5(2H)-ylidene]ethyl phosphate binding; it reads SNT. Lysine 135 lines the 4-amino-2-methyl-5-(diphosphooxymethyl)pyrimidine pocket. Glycine 162 provides a ligand contact to 2-[(2R,5Z)-2-carboxy-4-methylthiazol-5(2H)-ylidene]ethyl phosphate.

It belongs to the thiamine-phosphate synthase family. Mg(2+) serves as cofactor.

The enzyme catalyses 2-[(2R,5Z)-2-carboxy-4-methylthiazol-5(2H)-ylidene]ethyl phosphate + 4-amino-2-methyl-5-(diphosphooxymethyl)pyrimidine + 2 H(+) = thiamine phosphate + CO2 + diphosphate. The catalysed reaction is 2-(2-carboxy-4-methylthiazol-5-yl)ethyl phosphate + 4-amino-2-methyl-5-(diphosphooxymethyl)pyrimidine + 2 H(+) = thiamine phosphate + CO2 + diphosphate. It catalyses the reaction 4-methyl-5-(2-phosphooxyethyl)-thiazole + 4-amino-2-methyl-5-(diphosphooxymethyl)pyrimidine + H(+) = thiamine phosphate + diphosphate. It participates in cofactor biosynthesis; thiamine diphosphate biosynthesis; thiamine phosphate from 4-amino-2-methyl-5-diphosphomethylpyrimidine and 4-methyl-5-(2-phosphoethyl)-thiazole: step 1/1. In terms of biological role, condenses 4-methyl-5-(beta-hydroxyethyl)thiazole monophosphate (THZ-P) and 2-methyl-4-amino-5-hydroxymethyl pyrimidine pyrophosphate (HMP-PP) to form thiamine monophosphate (TMP). The chain is Thiamine-phosphate synthase from Pseudomonas fluorescens (strain Pf0-1).